Consider the following 211-residue polypeptide: Late expression factor 7 (211 aa).

Involved in late/very late gene activation. This is Late expression factor 7 (LEF-7) from Orgyia pseudotsugata multicapsid polyhedrosis virus (OpMNPV).